The sequence spans 424 residues: Putative glutamate--cysteine ligase 2-3 (424 aa).

Disordered stretches follow at residues 1-20 (MQMAGRGANRRGQHRSPVLV) and 405-424 (GAAADAHKDPAPMLTRVRRP).

The protein belongs to the glutamate--cysteine ligase type 2 family. YbdK subfamily.

It catalyses the reaction L-cysteine + L-glutamate + ATP = gamma-L-glutamyl-L-cysteine + ADP + phosphate + H(+). ATP-dependent carboxylate-amine ligase which exhibits weak glutamate--cysteine ligase activity. The protein is Putative glutamate--cysteine ligase 2-3 of Paenarthrobacter aurescens (strain TC1).